The chain runs to 203 residues: Large ribosomal subunit protein bL25 (203 aa).

The protein belongs to the bacterial ribosomal protein bL25 family. CTC subfamily. As to quaternary structure, part of the 50S ribosomal subunit; part of the 5S rRNA/L5/L18/L25 subcomplex. Contacts the 5S rRNA. Binds to the 5S rRNA independently of L5 and L18.

In terms of biological role, this is one of the proteins that binds to the 5S RNA in the ribosome where it forms part of the central protuberance. In Psychromonas ingrahamii (strain DSM 17664 / CCUG 51855 / 37), this protein is Large ribosomal subunit protein bL25.